Here is a 164-residue protein sequence, read N- to C-terminus: Ubiquitin-conjugating enzyme E2 2 (164 aa).

The 147-residue stretch at 4 to 150 (PARRRLMRDF…VKETVEKSWE (147 aa)) folds into the UBC core domain. The active-site Glycyl thioester intermediate is cysteine 88.

This sequence belongs to the ubiquitin-conjugating enzyme family.

The protein localises to the cytoplasm. It localises to the nucleus. The catalysed reaction is S-ubiquitinyl-[E1 ubiquitin-activating enzyme]-L-cysteine + [E2 ubiquitin-conjugating enzyme]-L-cysteine = [E1 ubiquitin-activating enzyme]-L-cysteine + S-ubiquitinyl-[E2 ubiquitin-conjugating enzyme]-L-cysteine.. It participates in protein modification; protein ubiquitination. In terms of biological role, catalyzes the covalent attachment of ubiquitin to other proteins. Plays a role in transcription regulation by catalyzing the monoubiquitination of histone H2B to form H2BK123ub1. H2BK123ub1 gives a specific tag for epigenetic transcriptional activation and is also a prerequisite for H3K4me and H3K79me formation. Also involved in postreplication repair of UV-damaged DNA, in N-end rule-dependent protein degradation and in sporulation. This chain is Ubiquitin-conjugating enzyme E2 2 (UBC2), found in Kluyveromyces lactis (strain ATCC 8585 / CBS 2359 / DSM 70799 / NBRC 1267 / NRRL Y-1140 / WM37) (Yeast).